Reading from the N-terminus, the 238-residue chain is Cysteine-rich venom protein pseudechetoxin-like (238 aa).

Positions methionine 1–glycine 19 are cleaved as a signal peptide. Residues threonine 20–serine 28 constitute a propeptide that is removed on maturation. Positions valine 38–tyrosine 164 constitute an SCP domain. Disulfide bonds link cysteine 75–cysteine 153, cysteine 92–cysteine 165, cysteine 148–cysteine 162, cysteine 184–cysteine 191, cysteine 187–cysteine 196, cysteine 200–cysteine 233, cysteine 209–cysteine 227, and cysteine 218–cysteine 231. The region spanning cysteine 200 to cysteine 233 is the ShKT domain.

It belongs to the CRISP family. In terms of tissue distribution, expressed by the venom gland.

The protein localises to the secreted. Its function is as follows. Blocks olfactory (CNGA2) and retinal (CNGA1) CNG channel currents. Does not affect neither depolarization- nor caffeine-induced contraction of smooth muscle. The chain is Cysteine-rich venom protein pseudechetoxin-like from Pseudonaja textilis (Eastern brown snake).